The chain runs to 350 residues: S-adenosylmethionine:tRNA ribosyltransferase-isomerase (350 aa).

It belongs to the QueA family. As to quaternary structure, monomer.

It localises to the cytoplasm. It carries out the reaction 7-aminomethyl-7-carbaguanosine(34) in tRNA + S-adenosyl-L-methionine = epoxyqueuosine(34) in tRNA + adenine + L-methionine + 2 H(+). It functions in the pathway tRNA modification; tRNA-queuosine biosynthesis. Transfers and isomerizes the ribose moiety from AdoMet to the 7-aminomethyl group of 7-deazaguanine (preQ1-tRNA) to give epoxyqueuosine (oQ-tRNA). The chain is S-adenosylmethionine:tRNA ribosyltransferase-isomerase from Bacillus cereus (strain G9842).